The chain runs to 178 residues: Large ribosomal subunit protein uL5 (178 aa).

This sequence belongs to the universal ribosomal protein uL5 family. Part of the 50S ribosomal subunit; part of the 5S rRNA/L5/L18/L25 subcomplex. Contacts the 5S rRNA and the P site tRNA. Forms a bridge to the 30S subunit in the 70S ribosome.

Functionally, this is one of the proteins that bind and probably mediate the attachment of the 5S RNA into the large ribosomal subunit, where it forms part of the central protuberance. In the 70S ribosome it contacts protein S13 of the 30S subunit (bridge B1b), connecting the 2 subunits; this bridge is implicated in subunit movement. Contacts the P site tRNA; the 5S rRNA and some of its associated proteins might help stabilize positioning of ribosome-bound tRNAs. The protein is Large ribosomal subunit protein uL5 of Syntrophomonas wolfei subsp. wolfei (strain DSM 2245B / Goettingen).